We begin with the raw amino-acid sequence, 993 residues long: Desmoglein-3 (993 aa).

Positions 1 to 23 are cleaved as a signal peptide; it reads MTWLLFRTSGALAILMVLILVHG. The propeptide occupies 24-48; sequence ELRIETKGQHGEDETAIQGRRRYKR. Cadherin domains are found at residues 48 to 156, 157 to 266, 267 to 386, and 383 to 494; these read REWV…APVF, SQSI…FPMF, KESQ…HPAS, and HPAS…CPTV. Topologically, residues 49–617 are extracellular; it reads EWVKFAKPCR…GKRPSGRLGS (569 aa). N109 and N179 each carry an N-linked (GlcNAc...) asparagine glycan. Residues N458 and N544 are each glycosylated (N-linked (GlcNAc...) asparagine). The helical transmembrane segment at 618–638 threads the bilayer; the sequence is AAIGLLLLGLLLLLLAPLLLL. Residues 639–993 are Cytoplasmic-facing; sequence TCDYGVGPIG…CTEDPCSRLI (355 aa). Residues 641–713 form a required for interaction with CTNND1 and localization at cell-cell junctions region; the sequence is DYGVGPIGGV…NTYAGGTVVE (73 aa). Desmoglein repeat repeat units lie at residues 903 to 929 and 930 to 960; these read LSAS…MVTE and TYSA…ERVI.

In terms of assembly, homodimer. Part of a complex that contains DSG3, PKP1, YAP1 and YWHAG; the complex is required for localization of DSG3 and YAP1 to the cell membrane in keratinocytes. Interacts with PKP2. Interacts with CTNND1; the interaction facilitates DSG3 localization and retention at cell-cell junctions. Interacts with CDH1; the interaction is required for CDH1 localization to developing adherens junctions. Interacts with RAC1; the interaction is required for DSG3 translocation to cell-cell junctions, organization of cortical F-actin bundles and actin anchoring at cell-cell junctions. Interacts with DSC3; the interaction may limit the interaction of DSC3 with p38MAPK family members and therefore repress p38MAPK signaling activation.

The protein localises to the cell membrane. The protein resides in the cell junction. It localises to the desmosome. It is found in the cytoplasm. Its subcellular location is the tight junction. In terms of biological role, a component of desmosome cell-cell junctions which are required for positive regulation of cellular adhesion. Required for adherens and desmosome junction assembly in response to mechanical force in keratinocytes. Required for desmosome-mediated cell-cell adhesion of cells surrounding the telogen hair club and the basal layer of the outer root sheath epithelium, consequently is essential for the anchoring of telogen hairs in the hair follicle. Required for the maintenance of the epithelial barrier via promoting desmosome-mediated intercellular attachment of suprabasal epithelium to basal cells. May play a role in the protein stability of the desmosome plaque components DSP, JUP, PKP1, PKP2 and PKP3. Required for YAP1 localization at the plasma membrane in keratinocytes in response to mechanical strain, via the formation of an interaction complex composed of DSG3, PKP1 and YWHAG. May also be involved in the positive regulation of YAP1 target gene transcription and as a result cell proliferation. Positively regulates cellular contractility and cell junction formation via organization of cortical F-actin bundles and anchoring of actin to tight junctions, in conjunction with RAC1. The cytoplasmic pool of DSG3 is required for the localization of CDH1 and CTNNB1 at developing adherens junctions, potentially via modulation of SRC activity. Inhibits keratinocyte migration via suppression of p38MAPK signaling, may therefore play a role in moderating wound healing. This chain is Desmoglein-3 (DSG3), found in Canis lupus familiaris (Dog).